A 477-amino-acid chain; its full sequence is MRWNQVDPQAHVEVLVVGISGNQPVEERIRSLYPDRLDEWVRRGDISTKQGELRLLPTLTGTVERVLFVGLGKAEGLTTDGLRRLFGKAAQFLKARQLSKVTIDATTFPDQPVELIAETFGLSTYEVKHYKTNTRATYDLDVTIWSDAGEQAVERGAALAQATNLARRLVTMPGNLLTAPALADEARFIAERHGHELKILEKADMEALGMGALLAVNQGSTIPPKLIVLEYKGAGDDAPIAVVGKGVTFDTGGYSIKPKDGIVGMKGDMGGAAAVLGLFEALGHLKPNVNVLGVIPATDNMISGDAFKPDDVITSMAGKTIEILNTDAEGRLVLADAVTYAKEYKPKMIIDLATLTGGVLVALGTEITGALTNDAGLYERFEAVTKETNEMVWQMPYVDQFIKQVRRSDVADLNNSPGRMGHMIFGGAFVGEFVGDTPWLHLDIAGTSEQKAATELGPKGATGVMVRSLYHFVEREK.

Mn(2+) is bound by residues lysine 245 and aspartate 250. Lysine 257 is a catalytic residue. Mn(2+)-binding residues include aspartate 268, aspartate 327, and glutamate 329. Arginine 331 is an active-site residue.

The protein belongs to the peptidase M17 family. It depends on Mn(2+) as a cofactor.

Its subcellular location is the cytoplasm. It catalyses the reaction Release of an N-terminal amino acid, Xaa-|-Yaa-, in which Xaa is preferably Leu, but may be other amino acids including Pro although not Arg or Lys, and Yaa may be Pro. Amino acid amides and methyl esters are also readily hydrolyzed, but rates on arylamides are exceedingly low.. It carries out the reaction Release of an N-terminal amino acid, preferentially leucine, but not glutamic or aspartic acids.. Functionally, presumably involved in the processing and regular turnover of intracellular proteins. Catalyzes the removal of unsubstituted N-terminal amino acids from various peptides. This Exiguobacterium sibiricum (strain DSM 17290 / CCUG 55495 / CIP 109462 / JCM 13490 / 255-15) protein is Probable cytosol aminopeptidase.